We begin with the raw amino-acid sequence, 151 residues long: Large ribosomal subunit protein bL9 (151 aa).

It belongs to the bacterial ribosomal protein bL9 family.

Its function is as follows. Binds to the 23S rRNA. The protein is Large ribosomal subunit protein bL9 of Dehalococcoides mccartyi (strain ATCC BAA-2266 / KCTC 15142 / 195) (Dehalococcoides ethenogenes (strain 195)).